Here is a 193-residue protein sequence, read N- to C-terminus: CD70 antigen (193 aa).

Over 1-17 the chain is Cytoplasmic; it reads MPEEGSGCSVRRRPYGC. Residues 18–38 traverse the membrane as a helical; Signal-anchor for type II membrane protein segment; it reads VLRAALVPLVAGLVICLVVCI. Topologically, residues 39–193 are extracellular; it reads QRFAQAQQQL…TFFGVQWVRP (155 aa). The region spanning 56-191 is the THD domain; it reads DVAELQLNHT…DETFFGVQWV (136 aa). Asparagine 63 carries an N-linked (GlcNAc...) asparagine glycan. Intrachain disulfides connect cysteine 115–cysteine 151 and cysteine 133–cysteine 168. An N-linked (GlcNAc...) asparagine glycan is attached at asparagine 170.

This sequence belongs to the tumor necrosis factor family. As to quaternary structure, homotrimer. In terms of processing, N-glycosylated.

The protein localises to the cell membrane. Expressed at the plasma membrane of B cells, it is the ligand of the CD27 receptor which is specifically expressed at the surface of T cells. The CD70-CD27 signaling pathway mediates antigen-specific T cell activation and expansion which in turn provides immune surveillance of B cells. The protein is CD70 antigen of Homo sapiens (Human).